A 236-amino-acid polypeptide reads, in one-letter code: Ribosome maturation protein SDO1 homolog (236 aa).

This sequence belongs to the SDO1/SBDS family.

This chain is Ribosome maturation protein SDO1 homolog, found in Pyrococcus horikoshii (strain ATCC 700860 / DSM 12428 / JCM 9974 / NBRC 100139 / OT-3).